The primary structure comprises 142 residues: Alpha-lactalbumin (142 aa).

The signal sequence occupies residues 1–19 (MRFFVPLFLVGILFPAILA). The region spanning 20–142 (KQFTKCELSQ…KLEQWLCEKL (123 aa)) is the C-type lysozyme domain. 4 cysteine pairs are disulfide-bonded: Cys25-Cys139, Cys47-Cys130, Cys80-Cys96, and Cys92-Cys110. Positions 57 and 58 each coordinate Ca(2+). Asn64 is a glycosylation site (N-linked (GlcNAc...) asparagine). Glu68 provides a ligand contact to Zn(2+). Asn90 carries an N-linked (GlcNAc...) asparagine; atypical; partial glycan. Positions 98, 100, 101, 102, 103, 106, and 107 each coordinate Ca(2+). Glu135 lines the Zn(2+) pocket.

Belongs to the glycosyl hydrolase 22 family. As to quaternary structure, lactose synthase (LS) is a heterodimer of a catalytic component, beta1,4-galactosyltransferase (beta4Gal-T1) and a regulatory component, alpha-lactalbumin (LA). In terms of tissue distribution, mammary gland specific. Secreted in milk.

It localises to the secreted. Its function is as follows. Regulatory subunit of lactose synthase, changes the substrate specificity of galactosyltransferase in the mammary gland making glucose a good acceptor substrate for this enzyme. This enables LS to synthesize lactose, the major carbohydrate component of milk. In other tissues, galactosyltransferase transfers galactose onto the N-acetylglucosamine of the oligosaccharide chains in glycoproteins. This is Alpha-lactalbumin (LALBA) from Homo sapiens (Human).